The chain runs to 544 residues: Probable protein kinase UbiB (544 aa).

The region spanning 123 to 501 (DFDIEPLASA…KRQQATGKFL (379 aa)) is the Protein kinase domain. ATP-binding positions include 129–137 (LASASIAQV) and K152. Catalysis depends on D287, which acts as the Proton acceptor. A helical membrane pass occupies residues 500–520 (FLFGVGATLVVCSAILVSSPY).

The protein belongs to the ABC1 family. UbiB subfamily.

The protein localises to the cell inner membrane. It participates in cofactor biosynthesis; ubiquinone biosynthesis [regulation]. Its function is as follows. Is probably a protein kinase regulator of UbiI activity which is involved in aerobic coenzyme Q (ubiquinone) biosynthesis. This chain is Probable protein kinase UbiB, found in Vibrio atlanticus (strain LGP32) (Vibrio splendidus (strain Mel32)).